Here is a 245-residue protein sequence, read N- to C-terminus: Eukaryotic translation initiation factor 6 (245 aa).

Belongs to the eIF-6 family. In terms of assembly, monomer. Associates with the 60S ribosomal subunit.

It localises to the cytoplasm. It is found in the nucleus. The protein localises to the nucleolus. In terms of biological role, binds to the 60S ribosomal subunit and prevents its association with the 40S ribosomal subunit to form the 80S initiation complex in the cytoplasm. May also be involved in ribosome biogenesis. In Danio rerio (Zebrafish), this protein is Eukaryotic translation initiation factor 6 (eif6).